The chain runs to 286 residues: 3-hydroxyanthranilate 3,4-dioxygenase (286 aa).

The segment at Met-1–Ile-160 is domain A (catalytic). Arg-43 contacts O2. Fe cation-binding residues include His-47, Glu-53, and His-91. Substrate is bound at residue Glu-53. Substrate contacts are provided by Arg-95 and Glu-105. The interval Pro-161 to Ile-177 is linker. A domain B region spans residues Met-178–Gly-286.

It belongs to the 3-HAO family. As to quaternary structure, monomer. It depends on Fe(2+) as a cofactor.

Its subcellular location is the cytoplasm. It is found in the cytosol. The catalysed reaction is 3-hydroxyanthranilate + O2 = (2Z,4Z)-2-amino-3-carboxymuconate 6-semialdehyde. Its pathway is cofactor biosynthesis; NAD(+) biosynthesis; quinolinate from L-kynurenine: step 3/3. Functionally, catalyzes the oxidative ring opening of 3-hydroxyanthranilate to 2-amino-3-carboxymuconate semialdehyde, which spontaneously cyclizes to quinolinate. This is 3-hydroxyanthranilate 3,4-dioxygenase from Homo sapiens (Human).